Consider the following 492-residue polypeptide: UDP-glucosyl transferase 73DL1 (492 aa).

His27 serves as the catalytic Proton acceptor. Residue Asp131 is the Charge relay of the active site. Positions 352, 353, 370, 375, 378, and 392 each coordinate UDP.

It belongs to the UDP-glycosyltransferase family. In terms of tissue distribution, mainly expressed in flowers, flower buds and young leaves, and, to a lesser extent, in old leaves, stems and roots.

The protein operates within secondary metabolite biosynthesis; terpenoid biosynthesis. Component of the oleanane-type triterpene saponins (e.g. saponarioside A and saponarioside B) biosynthetic pathway, leading to the production of natural products with detergent properties used as traditional sources of soap. A glycosyltransferase that mediates the conversion of QA-mono to QA-di via the elongation of the C-3 sugar chain with a D-galactose. The sequence is that of UDP-glucosyl transferase 73DL1 from Saponaria officinalis (Common soapwort).